Here is a 622-residue protein sequence, read N- to C-terminus: MTNSNFNHGNHGSNLPARLFTKQSQALIYNYKEAAVQRMLDFDNVSQRDTPSVGGLIHPGSDGGMYKAFFGFKELVIPVYNSVSEACQQCPNADVFLNFASHRSAYQSSLLALREPSIQTVVIIAEGVPENEARSLISIAKKLGKVIIGPATVGGIQAGCFKIGNTAGTIVYIMACKLYRSGSVGFVSKSGGLSNEMYNVLSRCTDGIYEGIAIGGDAFPGSTLTDHALRYEKLPEVQMIVILGELGGWDEYGIVEALKKGEITKPICAWVSGTVAKIFPTEVQFGHAGAKSGGETESADAKNKALREAGAVVPTSFEDFSNVIAATYAKLQSKGLVKPVEEPTPPELPLDFKTAVKAGKVRKPTSIISTICDDRGDELSYAGVPISEVCKEQYNMGDVIGLLWFKRKLPPYASKFFEMCLKLVADHGPCVSGAHNTIVAARAGKDLVSSLVSGLLTIGPRFGGAIDDSARVFQDAVDNNLQPSQFVEGMKSKGKRIPGIGHLIKSADEIDKRVVLLKDYAFTHFSSTKYLEYALEVEKYTLQKANNLILNVDGCIGVLFLDLLHSSGLFTQHEIKEIIDVGYLNGFFIVGRSVGLIGHALDQRRNKQGLYRHQADDVHYAL.

ATP contacts are provided by residues 228 to 248 and 279 to 305; these read ALRY…ELGG and FPTE…KNKA. Mg(2+) is bound at residue glutamate 245. The Tele-phosphohistidine intermediate role is filled by histidine 287. 306–316 is a binding site for CoA; sequence LREAGAVVPTS.

It in the N-terminal section; belongs to the succinate/malate CoA ligase beta subunit family. The protein in the C-terminal section; belongs to the succinate/malate CoA ligase alpha subunit family. In terms of assembly, homotetramer.

The protein localises to the cytoplasm. It carries out the reaction oxaloacetate + acetyl-CoA + ADP + phosphate = citrate + ATP + CoA. Functionally, catalyzes the cleavage of citrate into oxaloacetate and acetyl-CoA, the latter serving as common substrate in multiple biochemical reactions in protein, carbohydrate and lipid metabolism. In Dictyostelium discoideum (Social amoeba), this protein is Probable ATP-citrate synthase (acly).